The following is an 808-amino-acid chain: Sucrose synthase (808 aa).

Residues 271-753 (MLFRIALISP…GIERVYSTYT (483 aa)) are GT-B glycosyltransferase.

This sequence belongs to the glycosyltransferase 1 family. As to quaternary structure, probably a homotetramer.

The enzyme catalyses an NDP-alpha-D-glucose + D-fructose = a ribonucleoside 5'-diphosphate + sucrose + H(+). The catalysed reaction is ADP-alpha-D-glucose + D-fructose = sucrose + ADP + H(+). Its function is as follows. Catalyzes the reversible conversion of sucrose and a nucleotide disphosphate (NDP) into fructose and NDP-glucose; although the reaction is freely reversible in vitro, the physiological reaction seems to be sucrose cleavage. Unlike characterized plant enzymes prefers ADP as a cosubstrate, whereas plants prefer UDP. Its preference for ADP over UDP suggests it may directly link sucrose and glycogen metabolism. The sequence is that of Sucrose synthase from Thermosynechococcus vestitus (strain NIES-2133 / IAM M-273 / BP-1).